The primary structure comprises 44 residues: Protein PsbN (44 aa).

A helical transmembrane segment spans residues 6–26 (FFYGVFLWCLLISVTGYSIYI).

The protein belongs to the PsbN family.

It is found in the plastid. The protein resides in the chloroplast thylakoid membrane. Its function is as follows. May play a role in photosystem I and II biogenesis. This Ostreococcus tauri protein is Protein PsbN.